The sequence spans 349 residues: Probable transporter vicT (349 aa).

Residues 25–153 (IAAALLHALA…TALAGVVLVL (129 aa)) enclose the EamA domain. 9 consecutive transmembrane segments (helical) span residues 49-69 (PFTV…AYLW), 89-109 (AAGG…LSLS), 111-131 (ATVL…YWEG), 133-153 (TFAF…VLVL), 179-199 (LKGV…FSAM), 215-235 (FGVS…EVVW), 244-264 (LLAI…AGLG), 269-289 (RVTI…WAIW), and 294-314 (NVLT…PYLF).

It belongs to the TPT transporter family. SLC35D subfamily.

Its subcellular location is the membrane. Its function is as follows. Probable transporter; part of the gene cluster that mediates the biosynthesis of the secondary metabolite victorin, the molecular basis for Victoria blight of oats. This chain is Probable transporter vicT, found in Bipolaris victoriae (strain FI3) (Victoria blight of oats agent).